A 958-amino-acid chain; its full sequence is UvrABC system protein A (958 aa).

The ABC transporter 1 domain occupies 1-232 (MQSKSIKIQG…IETALKLGEG (232 aa)). 33-40 (GLSGSGKS) serves as a coordination point for ATP. A C4-type zinc finger spans residues 252–279 (CPICGFSIGELEPRLFSFNSPFGACPSC). ABC transporter domains follow at residues 315 to 593 (QYYP…KYLS) and 604 to 935 (RRKP…GKYL). 639-646 (GVSGSGKS) provides a ligand contact to ATP. Residues 738 to 764 (CEACRGDGILKIEMHFLPDVYVPCEVC) form a C4-type zinc finger.

This sequence belongs to the ABC transporter superfamily. UvrA family. Forms a heterotetramer with UvrB during the search for lesions.

Its subcellular location is the cytoplasm. Functionally, the UvrABC repair system catalyzes the recognition and processing of DNA lesions. UvrA is an ATPase and a DNA-binding protein. A damage recognition complex composed of 2 UvrA and 2 UvrB subunits scans DNA for abnormalities. When the presence of a lesion has been verified by UvrB, the UvrA molecules dissociate. The polypeptide is UvrABC system protein A (Oceanobacillus iheyensis (strain DSM 14371 / CIP 107618 / JCM 11309 / KCTC 3954 / HTE831)).